The chain runs to 188 residues: Elongation factor P (188 aa).

The protein belongs to the elongation factor P family.

Its subcellular location is the cytoplasm. Its pathway is protein biosynthesis; polypeptide chain elongation. Its function is as follows. Involved in peptide bond synthesis. Stimulates efficient translation and peptide-bond synthesis on native or reconstituted 70S ribosomes in vitro. Probably functions indirectly by altering the affinity of the ribosome for aminoacyl-tRNA, thus increasing their reactivity as acceptors for peptidyl transferase. In Wolbachia sp. subsp. Drosophila simulans (strain wRi), this protein is Elongation factor P.